A 169-amino-acid chain; its full sequence is S-ribosylhomocysteine lyase (169 aa).

Positions 54, 58, and 128 each coordinate Fe cation.

Belongs to the LuxS family. Homodimer. Fe cation serves as cofactor.

The catalysed reaction is S-(5-deoxy-D-ribos-5-yl)-L-homocysteine = (S)-4,5-dihydroxypentane-2,3-dione + L-homocysteine. Functionally, involved in the synthesis of autoinducer 2 (AI-2) which is secreted by bacteria and is used to communicate both the cell density and the metabolic potential of the environment. The regulation of gene expression in response to changes in cell density is called quorum sensing. Catalyzes the transformation of S-ribosylhomocysteine (RHC) to homocysteine (HC) and 4,5-dihydroxy-2,3-pentadione (DPD). This is S-ribosylhomocysteine lyase from Shewanella baltica (strain OS223).